Consider the following 394-residue polypeptide: Elongation factor Tu 2 (394 aa).

One can recognise a tr-type G domain in the interval 10-204 (KPHVNVGTIG…HLDTYIPEPE (195 aa)). The segment at 19–26 (GHVDHGKT) is G1. 19 to 26 (GHVDHGKT) contacts GTP. Threonine 26 is a binding site for Mg(2+). Residues 60 to 64 (GITIN) are G2. The tract at residues 81 to 84 (DCPG) is G3. Residues 81–85 (DCPGH) and 136–139 (NKCD) contribute to the GTP site. The G4 stretch occupies residues 136–139 (NKCD). The segment at 174–176 (SAL) is G5.

This sequence belongs to the TRAFAC class translation factor GTPase superfamily. Classic translation factor GTPase family. EF-Tu/EF-1A subfamily. As to quaternary structure, monomer.

Its subcellular location is the cytoplasm. It catalyses the reaction GTP + H2O = GDP + phosphate + H(+). GTP hydrolase that promotes the GTP-dependent binding of aminoacyl-tRNA to the A-site of ribosomes during protein biosynthesis. This chain is Elongation factor Tu 2, found in Haemophilus influenzae (strain 86-028NP).